A 435-amino-acid polypeptide reads, in one-letter code: Gamma-glutamyl phosphate reductase (435 aa).

The protein belongs to the gamma-glutamyl phosphate reductase family.

The protein resides in the cytoplasm. The catalysed reaction is L-glutamate 5-semialdehyde + phosphate + NADP(+) = L-glutamyl 5-phosphate + NADPH + H(+). It participates in amino-acid biosynthesis; L-proline biosynthesis; L-glutamate 5-semialdehyde from L-glutamate: step 2/2. Catalyzes the NADPH-dependent reduction of L-glutamate 5-phosphate into L-glutamate 5-semialdehyde and phosphate. The product spontaneously undergoes cyclization to form 1-pyrroline-5-carboxylate. The chain is Gamma-glutamyl phosphate reductase from Nostoc punctiforme (strain ATCC 29133 / PCC 73102).